Consider the following 570-residue polypeptide: MAYEKSTDISDVSRSMFLYPWLEYPDKTKELRKAMAPVHLPLSCYQMPKEEFPPSPECWRQHPSKPNSVPYCYFKKPEIYTHWHDLYDQREEREAEKMLRKMRDDCRYIKEVHQTHIKMFHLPMSKLTIKSEMRSRPLEPTQDPLKWQRLRELTKSLESPREDEQFYAAQALGCLRISDKFVMEALQQVAQTGPEKVKYEAYRTLAILGCLNKHVIRALIKQLKEKNEGQRMETLTGLRMALNSWAAVSKDKRTQVGDEGKLVPVLQTLIKKSSSEASLEAALCLGFLRPCSNMVQEFLLQCLCQGLKTQRMKALRMLVKVMHVHSAPVIKAILDQLCSSSVLEDRFEATQMLKTIGLEQIQAQGLEELTFNLLRRKTHNEPFLAVRQAVAQTVEELKLKPTMMNLVEAQLMNPDATARQEAVISLGVLGIRSPQVFHLLLDLLDAENHQAVKKSLQETLILCASIDPWIQNKLKNKVLSVYEAPKTNVKAEPTRFQKEPENPEELTIQDFRLAKLNPLFIAKSITKVGQKKTPAFPPCCSKPRKHRPQVIGPWQPRIKKQLRVLAEIAK.

This chain is Protein HEATR9 (HEATR9), found in Homo sapiens (Human).